A 531-amino-acid polypeptide reads, in one-letter code: Cation transporter HKT1;3 (531 aa).

Residues 1 to 46 (MNHCLVVSHKKLQTFRTFAASKFSSFTKSAQKSIKYSFQFIYQNNP) are Cytoplasmic-facing. The next 2 membrane-spanning stretches (helical) occupy residues 47 to 67 (LFVH…SLKV) and 108 to 128 (LWVL…MLGI). Over 129 to 190 (HFMRAEFGTK…GGHVEPKTIK (62 aa)) the chain is Cytoplasmic. 2 helical membrane-spanning segments follow: residues 191–211 (FLGF…SLLI) and 264–284 (ILLL…APCL). The Cytoplasmic segment spans residues 285–321 (RLMVWSLEKITGKKDCRYILEYPKAIGYKHLMSTRES). A run of 2 helical transmembrane segments spans residues 322–342 (VYLT…FLSL) and 383–403 (SAIL…SFLP). At 404–421 (RHDGEDSKTEKINKRKGL) the chain is on the cytoplasmic side. Transmembrane regions (helical) follow at residues 422-442 (LENW…LICI) and 494-514 (YGFA…VMLF). Topologically, residues 515–530 (GRLKTFNMKGGRAWKL) are cytoplasmic.

This sequence belongs to the TrkH potassium transport family. HKT (TC 2.A.38.3) subfamily. In terms of assembly, interacts with CNIH1. As to expression, weakly expressed. In roots, expressed in epidermis, exodermis, cortex, and sieve elements and companion cells of phloem. In mature leaves, expressed in large highly vacuolated cells of the adaxial epidermis, phloem and xylem.

The protein resides in the endoplasmic reticulum membrane. It is found in the golgi apparatus membrane. The enzyme catalyses Na(+)(in) = Na(+)(out). Functions as a highly-selective sodium transporter. Does not seem to function as sodium-potassium cotransporter. May be involved in turgor changes for rolling and unrolling of leaves in response to environmental variations. This chain is Cation transporter HKT1;3, found in Oryza sativa subsp. japonica (Rice).